A 366-amino-acid polypeptide reads, in one-letter code: Polyamine aminopropyltransferase 2 (366 aa).

The segment covering 20–58 (KDKRSELDSDKFELEQQDKHDIQDKQDKQDEQNKQDKQV) has biased composition (basic and acidic residues). The disordered stretch occupies residues 20–61 (KDKRSELDSDKFELEQQDKHDIQDKQDKQDEQNKQDKQVQSE). The region spanning 74–305 (DVWDEISLKE…TDWGFHLATN (232 aa)) is the PABS domain. Gln100 provides a ligand contact to S-methyl-5'-thioadenosine. His129 and Asp153 together coordinate spermidine. S-methyl-5'-thioadenosine is bound by residues Asp173 and 207-208 (DA). Asp225 acts as the Proton acceptor in catalysis.

It belongs to the spermidine/spermine synthase family. As to quaternary structure, homodimer or homotetramer.

It localises to the cytoplasm. It catalyses the reaction S-adenosyl 3-(methylsulfanyl)propylamine + putrescine = S-methyl-5'-thioadenosine + spermidine + H(+). It functions in the pathway amine and polyamine biosynthesis; spermidine biosynthesis; spermidine from putrescine: step 1/1. Catalyzes the irreversible transfer of a propylamine group from the amino donor S-adenosylmethioninamine (decarboxy-AdoMet) to putrescine (1,4-diaminobutane) to yield spermidine. The protein is Polyamine aminopropyltransferase 2 of Bacillus cereus (strain ATCC 14579 / DSM 31 / CCUG 7414 / JCM 2152 / NBRC 15305 / NCIMB 9373 / NCTC 2599 / NRRL B-3711).